We begin with the raw amino-acid sequence, 325 residues long: ATP phosphoribosyltransferase (325 aa).

This sequence belongs to the ATP phosphoribosyltransferase family. Long subfamily. It depends on Mg(2+) as a cofactor.

The protein resides in the cytoplasm. It carries out the reaction 1-(5-phospho-beta-D-ribosyl)-ATP + diphosphate = 5-phospho-alpha-D-ribose 1-diphosphate + ATP. It functions in the pathway amino-acid biosynthesis; L-histidine biosynthesis; L-histidine from 5-phospho-alpha-D-ribose 1-diphosphate: step 1/9. Its activity is regulated as follows. Feedback inhibited by histidine. In terms of biological role, catalyzes the condensation of ATP and 5-phosphoribose 1-diphosphate to form N'-(5'-phosphoribosyl)-ATP (PR-ATP). Has a crucial role in the pathway because the rate of histidine biosynthesis seems to be controlled primarily by regulation of HisG enzymatic activity. In Rhodopseudomonas palustris (strain BisB18), this protein is ATP phosphoribosyltransferase.